A 227-amino-acid chain; its full sequence is ATP-dependent dethiobiotin synthetase BioD (227 aa).

13–18 contributes to the ATP binding site; the sequence is EVGKSV. Ser-17 provides a ligand contact to Mg(2+). Lys-38 is an active-site residue. Ser-42 contributes to the substrate binding site. ATP-binding positions include Asp-55, 116–119, and 176–177; these read EGAG and ND. Positions 55 and 116 each coordinate Mg(2+).

The protein belongs to the dethiobiotin synthetase family. Homodimer. It depends on Mg(2+) as a cofactor.

Its subcellular location is the cytoplasm. It catalyses the reaction (7R,8S)-7,8-diammoniononanoate + CO2 + ATP = (4R,5S)-dethiobiotin + ADP + phosphate + 3 H(+). Its pathway is cofactor biosynthesis; biotin biosynthesis; biotin from 7,8-diaminononanoate: step 1/2. In terms of biological role, catalyzes a mechanistically unusual reaction, the ATP-dependent insertion of CO2 between the N7 and N8 nitrogen atoms of 7,8-diaminopelargonic acid (DAPA, also called 7,8-diammoniononanoate) to form a ureido ring. This chain is ATP-dependent dethiobiotin synthetase BioD, found in Serratia marcescens.